Here is a 950-residue protein sequence, read N- to C-terminus: Coatomer subunit beta-2 (950 aa).

HEAT repeat units follow at residues 92–126 (PEMILICQNLRNNLHHPNEYIRGVTLRFLCRLSEP), 127–164 (EVLEPLVPSILENLDHRHHFIRRHALSAISSIYRLPHG), 275–312 (TAVRAAANTYCELLSSQSDNNVKLIVLDRLNELRTSHR), 313–350 (DVMVDVVMDVLRALASPNLDVKRKVLDLVLDLLTARNV), and 392–429 (EVAGSVVHLLMDFLGDTNVAAAVDVVLFVREIIETNPK).

As to quaternary structure, oligomeric complex that consists of at least the alpha, beta, beta', gamma, delta, epsilon and zeta subunits.

It is found in the cytoplasm. Its subcellular location is the golgi apparatus membrane. The protein resides in the cytoplasmic vesicle. The protein localises to the COPI-coated vesicle membrane. In terms of biological role, the coatomer is a cytosolic protein complex that binds to dilysine motifs and reversibly associates with Golgi non-clathrin-coated vesicles, which further mediate biosynthetic protein transport from the ER, via the Golgi up to the trans Golgi network. Coatomer complex is required for budding from Golgi membranes, and is essential for the retrograde Golgi-to-ER transport of dilysine-tagged proteins. This is Coatomer subunit beta-2 from Oryza sativa subsp. japonica (Rice).